The chain runs to 302 residues: Probable 2-(5''-triphosphoribosyl)-3'-dephosphocoenzyme-A synthase (302 aa).

Belongs to the CitG/MdcB family.

It carries out the reaction 3'-dephospho-CoA + ATP = 2'-(5''-triphospho-alpha-D-ribosyl)-3'-dephospho-CoA + adenine. In Citrobacter koseri (strain ATCC BAA-895 / CDC 4225-83 / SGSC4696), this protein is Probable 2-(5''-triphosphoribosyl)-3'-dephosphocoenzyme-A synthase.